The chain runs to 574 residues: Putative ABC transporter ATP-binding protein VV2_1533 (574 aa).

ABC transporter domains are found at residues isoleucine 3–glutamate 244 and leucine 299–threonine 533. Residues glycine 37–serine 44 and glycine 332–serine 339 contribute to the ATP site.

This sequence belongs to the ABC transporter superfamily.

It is found in the cell inner membrane. Functionally, probably part of an ABC transporter complex. Responsible for energy coupling to the transport system. This chain is Putative ABC transporter ATP-binding protein VV2_1533, found in Vibrio vulnificus (strain CMCP6).